A 317-amino-acid polypeptide reads, in one-letter code: Ribosomal large subunit pseudouridine synthase D (317 aa).

Residues tryptophan 15–glutamate 89 enclose the S4 RNA-binding domain. Aspartate 141 is an active-site residue.

This sequence belongs to the pseudouridine synthase RluA family.

It localises to the cytoplasm. It catalyses the reaction uridine(1911/1915/1917) in 23S rRNA = pseudouridine(1911/1915/1917) in 23S rRNA. In terms of biological role, responsible for synthesis of pseudouridine from uracil at positions 1911, 1915 and 1917 in 23S ribosomal RNA. In Zymomonas mobilis subsp. mobilis (strain ATCC 31821 / ZM4 / CP4), this protein is Ribosomal large subunit pseudouridine synthase D.